Reading from the N-terminus, the 186-residue chain is Peptide deformylase (186 aa).

Fe cation-binding residues include Cys113 and His156. Glu157 is an active-site residue. Residue His160 participates in Fe cation binding.

The protein belongs to the polypeptide deformylase family. Requires Fe(2+) as cofactor.

It catalyses the reaction N-terminal N-formyl-L-methionyl-[peptide] + H2O = N-terminal L-methionyl-[peptide] + formate. In terms of biological role, removes the formyl group from the N-terminal Met of newly synthesized proteins. Requires at least a dipeptide for an efficient rate of reaction. N-terminal L-methionine is a prerequisite for activity but the enzyme has broad specificity at other positions. This Ligilactobacillus salivarius (strain UCC118) (Lactobacillus salivarius) protein is Peptide deformylase.